The primary structure comprises 91 residues: Large ribosomal subunit protein uL23 (91 aa).

Belongs to the universal ribosomal protein uL23 family. Part of the 50S ribosomal subunit. Contacts protein L29, and trigger factor when it is bound to the ribosome.

One of the early assembly proteins it binds 23S rRNA. One of the proteins that surrounds the polypeptide exit tunnel on the outside of the ribosome. Forms the main docking site for trigger factor binding to the ribosome. The protein is Large ribosomal subunit protein uL23 of Staphylococcus saprophyticus subsp. saprophyticus (strain ATCC 15305 / DSM 20229 / NCIMB 8711 / NCTC 7292 / S-41).